A 655-amino-acid polypeptide reads, in one-letter code: Acetyl-coenzyme A synthetase (655 aa).

Residues 193–196 and Thr-313 each bind CoA; that span reads RGNK. ATP-binding positions include 389 to 391, 413 to 418, Asp-502, and Arg-517; these read GEP and DTWWQT. Residue Ser-525 participates in CoA binding. Arg-528 contacts ATP. The Mg(2+) site is built by Val-539 and His-541. Arg-586 serves as a coordination point for CoA. Lys-611 carries the N6-acetyllysine modification.

It belongs to the ATP-dependent AMP-binding enzyme family. Requires Mg(2+) as cofactor. Acetylated. Deacetylation by the SIR2-homolog deacetylase activates the enzyme.

It catalyses the reaction acetate + ATP + CoA = acetyl-CoA + AMP + diphosphate. Catalyzes the conversion of acetate into acetyl-CoA (AcCoA), an essential intermediate at the junction of anabolic and catabolic pathways. AcsA undergoes a two-step reaction. In the first half reaction, AcsA combines acetate with ATP to form acetyl-adenylate (AcAMP) intermediate. In the second half reaction, it can then transfer the acetyl group from AcAMP to the sulfhydryl group of CoA, forming the product AcCoA. This Psychrobacter cryohalolentis (strain ATCC BAA-1226 / DSM 17306 / VKM B-2378 / K5) protein is Acetyl-coenzyme A synthetase.